The following is a 362-amino-acid chain: Aminomethyltransferase (362 aa).

The protein belongs to the GcvT family. As to quaternary structure, the glycine cleavage system is composed of four proteins: P, T, L and H.

The enzyme catalyses N(6)-[(R)-S(8)-aminomethyldihydrolipoyl]-L-lysyl-[protein] + (6S)-5,6,7,8-tetrahydrofolate = N(6)-[(R)-dihydrolipoyl]-L-lysyl-[protein] + (6R)-5,10-methylene-5,6,7,8-tetrahydrofolate + NH4(+). Functionally, the glycine cleavage system catalyzes the degradation of glycine. In Chlorobium limicola (strain DSM 245 / NBRC 103803 / 6330), this protein is Aminomethyltransferase.